Consider the following 403-residue polypeptide: RUN domain-containing protein 3B (403 aa).

Residues 1–20 (MASRSLGGLSGSRGGGKKSL) form a disordered region. Arg-13 is modified (omega-N-methylarginine). The RUN domain maps to 53 to 185 (DDSSPEFNNF…IDFSFCLKGE (133 aa)). The segment at 207–232 (SDSISSDEEELRTFGSSDSEGSTPEN) is disordered. Ser-211 and Ser-212 each carry phosphoserine. Polar residues predominate over residues 220–231 (FGSSDSEGSTPE). Residues 296–321 (AHKLEKEQLEYIIVELQDQLKSYQSL) adopt a coiled-coil conformation.

The protein belongs to the RUNDC3 family. As to quaternary structure, interacts with RAP2A.

In Rattus norvegicus (Rat), this protein is RUN domain-containing protein 3B (Rundc3b).